The chain runs to 296 residues: Ribosomal RNA small subunit methyltransferase A (296 aa).

Residues Asn-31, Leu-33, Gly-58, Glu-79, Asp-111, and Asn-136 each contribute to the S-adenosyl-L-methionine site.

Belongs to the class I-like SAM-binding methyltransferase superfamily. rRNA adenine N(6)-methyltransferase family. RsmA subfamily.

The protein localises to the cytoplasm. It catalyses the reaction adenosine(1518)/adenosine(1519) in 16S rRNA + 4 S-adenosyl-L-methionine = N(6)-dimethyladenosine(1518)/N(6)-dimethyladenosine(1519) in 16S rRNA + 4 S-adenosyl-L-homocysteine + 4 H(+). Its function is as follows. Specifically dimethylates two adjacent adenosines (A1518 and A1519) in the loop of a conserved hairpin near the 3'-end of 16S rRNA in the 30S particle. May play a critical role in biogenesis of 30S subunits. The protein is Ribosomal RNA small subunit methyltransferase A of Lactobacillus johnsonii (strain CNCM I-12250 / La1 / NCC 533).